We begin with the raw amino-acid sequence, 306 residues long: tRNA pseudouridine synthase B (306 aa).

Asp46 functions as the Nucleophile in the catalytic mechanism.

The protein belongs to the pseudouridine synthase TruB family. Type 1 subfamily.

It catalyses the reaction uridine(55) in tRNA = pseudouridine(55) in tRNA. Its function is as follows. Responsible for synthesis of pseudouridine from uracil-55 in the psi GC loop of transfer RNAs. The protein is tRNA pseudouridine synthase B of Gluconacetobacter diazotrophicus (strain ATCC 49037 / DSM 5601 / CCUG 37298 / CIP 103539 / LMG 7603 / PAl5).